A 255-amino-acid chain; its full sequence is Flagellar brake protein YcgR (255 aa).

In terms of domain architecture, PilZ spans 122 to 240 (QRRTYFRINT…ERDLQQVIFE (119 aa)).

It belongs to the YcgR family. In terms of assembly, monomer. Interacts with the flagellar basal bodies.

The protein localises to the bacterial flagellum basal body. Acts as a flagellar brake, regulating swimming and swarming in a bis-(3'-5') cyclic diguanylic acid (c-di-GMP)-dependent manner. Binds 1 c-di-GMP dimer per subunit. Increasing levels of c-di-GMP lead to decreased motility. The chain is Flagellar brake protein YcgR from Pectobacterium carotovorum subsp. carotovorum (strain PC1).